An 86-amino-acid chain; its full sequence is UPF0512 protein V (86 aa).

The protein belongs to the UPF0512 family.

This is UPF0512 protein V from Dictyostelium discoideum (Social amoeba).